The sequence spans 302 residues: tRNA dimethylallyltransferase (302 aa).

Gly-10–Ser-17 is a binding site for ATP. Position 12–17 (Thr-12–Ser-17) interacts with substrate. An interaction with substrate tRNA region spans residues Asp-35–Gln-38.

It belongs to the IPP transferase family. Monomer. The cofactor is Mg(2+).

The enzyme catalyses adenosine(37) in tRNA + dimethylallyl diphosphate = N(6)-dimethylallyladenosine(37) in tRNA + diphosphate. Functionally, catalyzes the transfer of a dimethylallyl group onto the adenine at position 37 in tRNAs that read codons beginning with uridine, leading to the formation of N6-(dimethylallyl)adenosine (i(6)A). In Acaryochloris marina (strain MBIC 11017), this protein is tRNA dimethylallyltransferase.